The chain runs to 157 residues: Small ribosomal subunit protein uS17 (157 aa).

Belongs to the universal ribosomal protein uS17 family.

The sequence is that of Small ribosomal subunit protein uS17 (RPS11) from Dunaliella tertiolecta (Green alga).